Consider the following 61-residue polypeptide: Large ribosomal subunit protein eL24 (61 aa).

Zn(2+) is bound by residues C7, C10, C33, and C37. The C4-type zinc finger occupies 7 to 37 (CTYCGRSIEPGTGLMYVKNDGSVLWFCSSKC).

It belongs to the eukaryotic ribosomal protein eL24 family. Part of the 50S ribosomal subunit. Forms a cluster with proteins L3 and L14. Zn(2+) is required as a cofactor.

In terms of biological role, binds to the 23S rRNA. This Hyperthermus butylicus (strain DSM 5456 / JCM 9403 / PLM1-5) protein is Large ribosomal subunit protein eL24.